The chain runs to 153 residues: Ribonuclease H (153 aa).

The region spanning 1 to 141 (MKHVHIFTDG…ADELARKGME (141 aa)) is the RNase H type-1 domain. Mg(2+) contacts are provided by aspartate 9, glutamate 47, aspartate 69, and aspartate 133. The tract at residues 123–153 (HAGHPENERADELARKGMEPFKKARRADAVK) is disordered. Residues 125–153 (GHPENERADELARKGMEPFKKARRADAVK) show a composition bias toward basic and acidic residues.

This sequence belongs to the RNase H family. As to quaternary structure, monomer. Mg(2+) is required as a cofactor.

It localises to the cytoplasm. The catalysed reaction is Endonucleolytic cleavage to 5'-phosphomonoester.. In terms of biological role, endonuclease that specifically degrades the RNA of RNA-DNA hybrids. The polypeptide is Ribonuclease H (Rhizobium meliloti (strain 1021) (Ensifer meliloti)).